The following is a 378-amino-acid chain: S-(hydroxymethyl)glutathione dehydrogenase (378 aa).

Zn(2+) contacts are provided by Cys49, His71, Cys101, Cys104, Cys107, Cys115, and Cys178.

It belongs to the zinc-containing alcohol dehydrogenase family. Class-III subfamily. Homodimer. Requires Zn(2+) as cofactor.

Its subcellular location is the cytoplasm. It catalyses the reaction S-(hydroxymethyl)glutathione + NADP(+) = S-formylglutathione + NADPH + H(+). The enzyme catalyses S-(hydroxymethyl)glutathione + NAD(+) = S-formylglutathione + NADH + H(+). It carries out the reaction a primary alcohol + NAD(+) = an aldehyde + NADH + H(+). The catalysed reaction is a secondary alcohol + NAD(+) = a ketone + NADH + H(+). It catalyses the reaction S-nitrosoglutathione + NADH + H(+) = S-(hydroxysulfenamide)glutathione + NAD(+). In terms of biological role, has high formaldehyde dehydrogenase activity in the presence of glutathione and catalyzes the oxidation of normal alcohols in a reaction that is not GSH-dependent. In addition, hemithiolacetals other than those formed from GSH, including omega-thiol fatty acids, also are substrates. Also acts as a S-nitroso-glutathione reductase by catalyzing the NADH-dependent reduction of S-nitrosoglutathione. The polypeptide is S-(hydroxymethyl)glutathione dehydrogenase (frmA) (Haemophilus influenzae (strain ATCC 51907 / DSM 11121 / KW20 / Rd)).